A 118-amino-acid chain; its full sequence is MRVAAFHAGLSAERRAAAYLIAKGYRILARRFRTPYGEIDIVARRRQLLAFVEVKARRSLDDAAYAVTRKQQQRIINAAQAWLMAHPEHETFEFRFDAMLIAPRRLPRHLLGAFDAST.

The protein belongs to the UPF0102 family.

This Nitrobacter winogradskyi (strain ATCC 25391 / DSM 10237 / CIP 104748 / NCIMB 11846 / Nb-255) protein is UPF0102 protein Nwi_0116.